We begin with the raw amino-acid sequence, 231 residues long: Ribosyldihydronicotinamide dehydrogenase [quinone] (231 aa).

FAD contacts are provided by residues His-12, 18-21 (FNGS), and 104-107 (LYWF). 127 to 129 (FDI) is a binding site for substrate. Residues 148–151 (TTGG) and Tyr-156 contribute to the FAD site. Zn(2+) is bound by residues His-174 and His-178. Asp-194 is a binding site for FAD. At Ser-197 the chain carries Phosphoserine. Arg-201 lines the FAD pocket. Cys-223 serves as a coordination point for Zn(2+).

This sequence belongs to the NAD(P)H dehydrogenase (quinone) family. Homodimer. It depends on Zn(2+) as a cofactor. Requires FAD as cofactor.

The protein resides in the cytoplasm. The catalysed reaction is 1-(beta-D-ribofuranosyl)-1,4-dihydronicotinamide + a quinone + H(+) = beta-nicotinamide D-riboside + a quinol. Functionally, the enzyme apparently serves as a quinone reductase in connection with conjugation reactions of hydroquinones involved in detoxification pathways as well as in biosynthetic processes such as the vitamin K-dependent gamma-carboxylation of glutamate residues in prothrombin synthesis. This Mus musculus (Mouse) protein is Ribosyldihydronicotinamide dehydrogenase [quinone] (Nqo2).